Reading from the N-terminus, the 1501-residue chain is Protein SNQ2 (1501 aa).

Residues 1–17 (MSNIKSTQDSSHNAVAR) show a composition bias toward polar residues. Residues 1-56 (MSNIKSTQDSSHNAVARSSSASFAASEESFTGITHDKDEQSDTPADKLTKMLTGPA) are disordered. At Ser2 the chain carries N-acetylserine. Residues 18–30 (SSSASFAASEESF) show a composition bias toward low complexity. Phosphoserine occurs at positions 26 and 29. Over residues 34-49 (THDKDEQSDTPADKLT) the composition is skewed to basic and acidic residues. Ser64, Ser80, and Ser86 each carry phosphoserine. The region spanning 161–410 (FKGIKAKRHQ…FAKMGYLCPP (250 aa)) is the ABC transporter 1 domain. Residues Asn273, Asn334, and Asn518 are each glycosylated (N-linked (GlcNAc...) asparagine). 5 consecutive transmembrane segments (helical) span residues 521-541 (YTVI…SLFY), 554-574 (GGVL…NISF), 600-620 (LASF…LFFL), 628-648 (GSFF…NGLF), and 664-680 (ISGI…TYMI). N-linked (GlcNAc...) asparagine glycosylation occurs at Asn730. The chain crosses the membrane as a helical span at residues 771–789 (FGILWCFLLGYVVLKVIFT). An ABC transporter 2 domain is found at 853–1095 (FIWKDVCFTI…ILNYFERNGA (243 aa)). N-linked (GlcNAc...) asparagine glycosylation occurs at Asn874. 889 to 896 (GESGAGKT) contacts ATP. Position 1153 is a phosphothreonine (Thr1153). 4 helical membrane passes run 1190–1212 (IMSK…FNVG), 1216–1236 (VGLQ…APAM), 1277–1296 (HLFF…RIFF), and 1333–1352 (ANVI…GVTQ). Asn1401 is a glycosylation site (N-linked (GlcNAc...) asparagine). A helical transmembrane segment spans residues 1455–1475 (FGIFWIYIFFNIIAMVCVYYL).

This sequence belongs to the ABC transporter superfamily. ABCG family. PDR (TC 3.A.1.205) subfamily.

It localises to the membrane. Could be an ATP-dependent permease. Confers hyper-resistance to the mutagens 4-nitroquinoline-N-oxide (4-NQO) and triaziquone, as well as to the chemicals sulphomethuron methyl phenanthroline when present in multiple copies. Exhibits nucleoside triphosphatase activity. The chain is Protein SNQ2 (SNQ2) from Saccharomyces cerevisiae (strain ATCC 204508 / S288c) (Baker's yeast).